The sequence spans 452 residues: Isocitrate dehydrogenase [NADP], mitochondrial (452 aa).

The N-terminal 39 residues, 1–39, are a transit peptide targeting the mitochondrion; that stretch reads MAGYLRAVSSLCRASGSARTWAPAALTVPSWPEQPRRHY. N6-acetyllysine is present on residues lysine 45, lysine 48, lysine 67, and lysine 69. N6-acetyllysine; alternate occurs at positions 80 and 106. N6-succinyllysine; alternate is present on residues lysine 80 and lysine 106. Residues 115-117 and arginine 122 contribute to the NADP(+) site; that span reads TIT. Threonine 117 contacts D-threo-isocitrate. D-threo-isocitrate-binding positions include 134-140 and arginine 149; that span reads SPNGTIR. Lysine 155 is subject to N6-acetyllysine. An N6-acetyllysine; alternate modification is found at lysine 166. Lysine 166 is modified (N6-succinyllysine; alternate). Arginine 172 is a binding site for D-threo-isocitrate. 2 positions are modified to N6-acetyllysine; alternate: lysine 180 and lysine 193. N6-succinyllysine; alternate is present on residues lysine 180 and lysine 193. Lysine 199 is subject to N6-acetyllysine. Lysine 256 bears the N6-acetyllysine; alternate mark. The residue at position 256 (lysine 256) is an N6-succinyllysine; alternate. An N6-acetyllysine mark is found at lysine 263, lysine 272, lysine 275, and lysine 280. N6-acetyllysine; alternate is present on lysine 282. Lysine 282 carries the post-translational modification N6-succinyllysine; alternate. Aspartate 291 provides a ligand contact to Mn(2+). Lysine 299 lines the NADP(+) pocket. Aspartate 314 serves as a coordination point for Mn(2+). Residues 349–354 and asparagine 367 contribute to the NADP(+) site; that span reads GTVTRH. The residue at position 384 (lysine 384) is an N6-acetyllysine; alternate. Lysine 384 is modified (N6-succinyllysine; alternate). Residues lysine 400, lysine 413, and lysine 442 each carry the N6-acetyllysine modification.

This sequence belongs to the isocitrate and isopropylmalate dehydrogenases family. In terms of assembly, homodimer. The cofactor is Mg(2+). Requires Mn(2+) as cofactor. In terms of processing, acetylation at Lys-413 dramatically reduces catalytic activity. Deacetylated by SIRT3. In terms of tissue distribution, predominantly expressed in heart, liver and kidney. Expressed in activated B lymphocytes.

It localises to the mitochondrion. The enzyme catalyses D-threo-isocitrate + NADP(+) = 2-oxoglutarate + CO2 + NADPH. Functionally, plays a role in intermediary metabolism and energy production. It may tightly associate or interact with the pyruvate dehydrogenase complex. This is Isocitrate dehydrogenase [NADP], mitochondrial (Idh2) from Mus musculus (Mouse).